The sequence spans 400 residues: Protein phosphatase methylesterase 1 (400 aa).

A disordered region spans residues 1-72; it reads MSDLQRTWAK…NQKLFARPQG (72 aa). Residues 19–28 show a composition bias toward acidic residues; sequence PFDEPQEEQG. Over residues 44-54 the composition is skewed to low complexity; the sequence is SSASSASSVSS. Positions 55 to 64 are enriched in polar residues; it reads TGTIIPSPNQ. Catalysis depends on residues Ser-202, Asp-228, and His-358.

The protein belongs to the AB hydrolase superfamily.

The catalysed reaction is [phosphatase 2A protein]-C-terminal L-leucine methyl ester + H2O = [phosphatase 2A protein]-C-terminal L-leucine + methanol + H(+). Demethylates proteins that have been reversibly carboxymethylated. Demethylates the phosphatase PP2A catalytic subunit. The polypeptide is Protein phosphatase methylesterase 1 (PPE1) (Gibberella zeae (strain ATCC MYA-4620 / CBS 123657 / FGSC 9075 / NRRL 31084 / PH-1) (Wheat head blight fungus)).